The sequence spans 271 residues: Phosphatidylinositol transfer protein beta isoform (271 aa).

Lysine 215 carries the post-translational modification N6-acetyllysine. Serine 262 carries the post-translational modification Phosphoserine.

Belongs to the PtdIns transfer protein family. PI transfer class I subfamily. Constitutive phosphorylation of Ser-262 has no effect on phospholipid transfer activity but is required for Golgi targeting. Expressed abundantly in brain, kidney, liver, and lung, but in a lesser amount in testis.

The protein localises to the golgi apparatus. The protein resides in the golgi apparatus membrane. It localises to the endoplasmic reticulum membrane. The enzyme catalyses a 1,2-diacyl-sn-glycero-3-phosphocholine(in) = a 1,2-diacyl-sn-glycero-3-phosphocholine(out). It carries out the reaction a 1,2-diacyl-sn-glycero-3-phospho-(1D-myo-inositol)(in) = a 1,2-diacyl-sn-glycero-3-phospho-(1D-myo-inositol)(out). The catalysed reaction is an N-(acyl)-sphingosylphosphocholine(in) = an N-(acyl)-sphingosylphosphocholine(out). With respect to regulation, phosphatidylinositol transfer activity is inhibited by N-ethylmaleimide. Catalyzes the transfer of phosphatidylinositol between membranes. Also catalyzes the transfer of phosphatidylcholine and sphingomyelin between membranes. Required for COPI-mediated retrograde transport from the Golgi to the endoplasmic reticulum; phosphatidylinositol and phosphatidylcholine transfer activity is essential for this function. The chain is Phosphatidylinositol transfer protein beta isoform (Pitpnb) from Rattus norvegicus (Rat).